We begin with the raw amino-acid sequence, 1058 residues long: Non-canonical non-ribosomal peptide synthetase FUB8 (1058 aa).

Residues Glu43–Glu365 form an adenylation (A) domain region. The 78-residue stretch at Thr566–Leu643 folds into the Carrier domain. Position 601 is an O-(pantetheine 4'-phosphoryl)serine (Ser601). The interval Leu680–Ile921 is thioester reductase (TR) domain.

It functions in the pathway mycotoxin biosynthesis. Functionally, non-canonical non-ribosomal peptide synthetase; part of the gene cluster that mediates the biosynthesis of fusaric acid, a mycotoxin with low to moderate toxicity to animals and humans, but with high phytotoxic properties. L-aspartate is suggested as fusaric acid amino acid precursor that is activated and further processed to O-acetyl-L-homoserine by cluster enzymes aspartate kinase FUB3 and homoserine O-acetyltransferase FUB5, as well as enzymes of the primary metabolism. The polyketide synthase (PKS) FUB1 generates the triketide trans-2-hexenal which is presumptively released by the hydrolase FUB4 and linked to the NRPS-bound amino acid precursor by NAD(P)-dependent dehydrogenase FUB6. FUB1, FUB4, and the non-canonical NRPS Fub8 may form an enzyme complex. Further processing of the NRPS-bound intermediate might be carried out by FUB6 and the sulfhydrylase FUB7, enabling a spontaneous electrocyclization to close the carbon backbone of fusaric acid. Dihydrofusaric acid is likely to be released via reduction by the thioester reductase (TR) domain of FUB8 whereupon the final oxidation to fusaric acid may (also) be performed by the FMN-dependent dehydrogenase FUB9. The protein is Non-canonical non-ribosomal peptide synthetase FUB8 of Gibberella moniliformis (strain M3125 / FGSC 7600) (Maize ear and stalk rot fungus).